The primary structure comprises 100 residues: MHLSPQEKDKLLIVTAALLAERRLNRGLKLNHPEAVAWLSFLVLEGARDGKSVAELMQEGTTWLSRNQVMDGIPELVQEVQIEAVFPDGTKLVTLHDPIR.

Belongs to the urease gamma subunit family. As to quaternary structure, heterotrimer of UreA (gamma), UreB (beta) and UreC (alpha) subunits. Three heterotrimers associate to form the active enzyme.

The protein resides in the cytoplasm. The catalysed reaction is urea + 2 H2O + H(+) = hydrogencarbonate + 2 NH4(+). It functions in the pathway nitrogen metabolism; urea degradation; CO(2) and NH(3) from urea (urease route): step 1/1. This Synechococcus sp. (strain WH7805) protein is Urease subunit gamma.